The primary structure comprises 110 residues: Thiosulfate sulfurtransferase GlpE (110 aa).

Positions 19 to 107 (EDSLAVLVDI…WRRQALPIIQ (89 aa)) constitute a Rhodanese domain. Cysteine 67 acts as the Cysteine persulfide intermediate in catalysis.

This sequence belongs to the GlpE family.

It is found in the cytoplasm. The catalysed reaction is thiosulfate + hydrogen cyanide = thiocyanate + sulfite + 2 H(+). It carries out the reaction thiosulfate + [thioredoxin]-dithiol = [thioredoxin]-disulfide + hydrogen sulfide + sulfite + 2 H(+). In terms of biological role, transferase that catalyzes the transfer of sulfur from thiosulfate to thiophilic acceptors such as cyanide or dithiols. May function in a CysM-independent thiosulfate assimilation pathway by catalyzing the conversion of thiosulfate to sulfite, which can then be used for L-cysteine biosynthesis. This Photobacterium profundum (strain SS9) protein is Thiosulfate sulfurtransferase GlpE.